The chain runs to 579 residues: Tyrosine 3-monooxygenase (579 aa).

A compositionally biased stretch (acidic residues) spans V105 to Q114. Positions V105 to D132 are disordered. Fe cation contacts are provided by H409, H414, and E454.

The protein belongs to the biopterin-dependent aromatic amino acid hydroxylase family. Fe(2+) serves as cofactor.

The protein resides in the cytoplasm. It localises to the perinuclear region. It is found in the cell projection. The protein localises to the axon. It carries out the reaction (6R)-L-erythro-5,6,7,8-tetrahydrobiopterin + L-tyrosine + O2 = (4aS,6R)-4a-hydroxy-L-erythro-5,6,7,8-tetrahydrobiopterin + L-dopa. It functions in the pathway catecholamine biosynthesis; dopamine biosynthesis; dopamine from L-tyrosine: step 1/2. Phosphorylation leads to an increase in the catalytic activity. In terms of biological role, plays an important role in the physiology of adrenergic neurons. This Drosophila melanogaster (Fruit fly) protein is Tyrosine 3-monooxygenase (ple).